A 245-amino-acid polypeptide reads, in one-letter code: 1-(5-phosphoribosyl)-5-[(5-phosphoribosylamino)methylideneamino] imidazole-4-carboxamide isomerase (245 aa).

The active-site Proton acceptor is the D7. The Proton donor role is filled by D129.

This sequence belongs to the HisA/HisF family.

It localises to the cytoplasm. It catalyses the reaction 1-(5-phospho-beta-D-ribosyl)-5-[(5-phospho-beta-D-ribosylamino)methylideneamino]imidazole-4-carboxamide = 5-[(5-phospho-1-deoxy-D-ribulos-1-ylimino)methylamino]-1-(5-phospho-beta-D-ribosyl)imidazole-4-carboxamide. It participates in amino-acid biosynthesis; L-histidine biosynthesis; L-histidine from 5-phospho-alpha-D-ribose 1-diphosphate: step 4/9. This chain is 1-(5-phosphoribosyl)-5-[(5-phosphoribosylamino)methylideneamino] imidazole-4-carboxamide isomerase, found in Salmonella enteritidis PT4 (strain P125109).